We begin with the raw amino-acid sequence, 254 residues long: Acetylglutamate kinase (254 aa).

Residues 40-41 (GG), Arg-62, and Asn-154 each bind substrate. ATP contacts are provided by residues 177–182 (DVSGIL) and 205–207 (IIT).

It belongs to the acetylglutamate kinase family. ArgB subfamily. In terms of assembly, homodimer.

It is found in the cytoplasm. The enzyme catalyses N-acetyl-L-glutamate + ATP = N-acetyl-L-glutamyl 5-phosphate + ADP. The protein operates within amino-acid biosynthesis; L-arginine biosynthesis; N(2)-acetyl-L-ornithine from L-glutamate: step 2/4. In terms of biological role, catalyzes the ATP-dependent phosphorylation of N-acetyl-L-glutamate. The protein is Acetylglutamate kinase of Yersinia enterocolitica serotype O:8 / biotype 1B (strain NCTC 13174 / 8081).